The chain runs to 140 residues: Small ribosomal subunit protein uS8c (140 aa).

Belongs to the universal ribosomal protein uS8 family. Part of the 30S ribosomal subunit.

Its subcellular location is the plastid. The protein resides in the chloroplast. Its function is as follows. One of the primary rRNA binding proteins, it binds directly to 16S rRNA central domain where it helps coordinate assembly of the platform of the 30S subunit. The sequence is that of Small ribosomal subunit protein uS8c (rps8) from Euglena gracilis.